The primary structure comprises 75 residues: Small ribosomal subunit protein bS18 (75 aa).

It belongs to the bacterial ribosomal protein bS18 family. Part of the 30S ribosomal subunit. Forms a tight heterodimer with protein bS6.

Functionally, binds as a heterodimer with protein bS6 to the central domain of the 16S rRNA, where it helps stabilize the platform of the 30S subunit. The protein is Small ribosomal subunit protein bS18 of Klebsiella pneumoniae (strain 342).